Here is a 432-residue protein sequence, read N- to C-terminus: Histidine--tRNA ligase (432 aa).

Belongs to the class-II aminoacyl-tRNA synthetase family.

It localises to the cytoplasm. It carries out the reaction tRNA(His) + L-histidine + ATP = L-histidyl-tRNA(His) + AMP + diphosphate + H(+). The polypeptide is Histidine--tRNA ligase (Pyrococcus furiosus (strain ATCC 43587 / DSM 3638 / JCM 8422 / Vc1)).